We begin with the raw amino-acid sequence, 374 residues long: tRNA-specific 2-thiouridylase MnmA (374 aa).

Residues 12–19 (GMSGGVDS) and Met-38 contribute to the ATP site. The interval 98–100 (NPD) is interaction with target base in tRNA. Residue Cys-103 is the Nucleophile of the active site. An intrachain disulfide couples Cys-103 to Cys-202. Gly-128 lines the ATP pocket. The tract at residues 152-154 (KDQ) is interaction with tRNA. Catalysis depends on Cys-202, which acts as the Cysteine persulfide intermediate. An interaction with tRNA region spans residues 316-317 (RY).

Belongs to the MnmA/TRMU family.

It is found in the cytoplasm. The enzyme catalyses S-sulfanyl-L-cysteinyl-[protein] + uridine(34) in tRNA + AH2 + ATP = 2-thiouridine(34) in tRNA + L-cysteinyl-[protein] + A + AMP + diphosphate + H(+). Its function is as follows. Catalyzes the 2-thiolation of uridine at the wobble position (U34) of tRNA, leading to the formation of s(2)U34. This chain is tRNA-specific 2-thiouridylase MnmA, found in Vibrio parahaemolyticus serotype O3:K6 (strain RIMD 2210633).